A 234-amino-acid chain; its full sequence is Glucosamine-6-phosphate deaminase (234 aa).

Residue aspartate 62 is the Proton acceptor; for enolization step of the active site. The active-site For ring-opening step is the asparagine 128. Histidine 130 (proton acceptor; for ring-opening step) is an active-site residue. The active-site For ring-opening step is glutamate 135.

The protein belongs to the glucosamine/galactosamine-6-phosphate isomerase family. NagB subfamily.

The catalysed reaction is alpha-D-glucosamine 6-phosphate + H2O = beta-D-fructose 6-phosphate + NH4(+). It functions in the pathway amino-sugar metabolism; N-acetylneuraminate degradation; D-fructose 6-phosphate from N-acetylneuraminate: step 5/5. Functionally, catalyzes the reversible isomerization-deamination of glucosamine 6-phosphate (GlcN6P) to form fructose 6-phosphate (Fru6P) and ammonium ion. This is Glucosamine-6-phosphate deaminase from Streptococcus pyogenes serotype M1.